Here is a 268-residue protein sequence, read N- to C-terminus: MHELLLFASVPAHQHHELLQQLAGLTAMQPQHRLERRLVFKAYRKPGLVNVRVGASQDLQGAELQRLNKMLNGGMFYTQVVGPVSEADFGAPASPVADQDAHMSGTDEKSSVRPHYYDYENQPWKLEFRDIPEAATRSAVTTRLMASASLPKGDVTVPMNAWGYNFVTEYAVEGDIFIHNDIVIFLHRVLHYPTESQEPRRQLPALNEMTPLDRSGGYVLQAAITVQDGSNQETMKIASQHLFGLREQLKSAVRLEQADRLSLDTRAK.

The segment at Ala-91–Val-112 is disordered. The span at Gln-99–Val-112 shows a compositional bias: basic and acidic residues.

This sequence belongs to the Mediator complex subunit 18 family. Component of the Mediator complex.

It is found in the nucleus. Functionally, component of the Mediator complex, a coactivator involved in the regulated transcription of nearly all RNA polymerase II-dependent genes. Mediator functions as a bridge to convey information from gene-specific regulatory proteins to the basal RNA polymerase II transcription machinery. Mediator is recruited to promoters by direct interactions with regulatory proteins and serves as a scaffold for the assembly of a functional preinitiation complex with RNA polymerase II and the general transcription factors. This chain is Mediator of RNA polymerase II transcription subunit 18 (srb5), found in Aspergillus fumigatus (strain ATCC MYA-4609 / CBS 101355 / FGSC A1100 / Af293) (Neosartorya fumigata).